Consider the following 212-residue polypeptide: Leucyl/phenylalanyl-tRNA--protein transferase (212 aa).

The protein belongs to the L/F-transferase family.

It is found in the cytoplasm. The enzyme catalyses N-terminal L-lysyl-[protein] + L-leucyl-tRNA(Leu) = N-terminal L-leucyl-L-lysyl-[protein] + tRNA(Leu) + H(+). It catalyses the reaction N-terminal L-arginyl-[protein] + L-leucyl-tRNA(Leu) = N-terminal L-leucyl-L-arginyl-[protein] + tRNA(Leu) + H(+). It carries out the reaction L-phenylalanyl-tRNA(Phe) + an N-terminal L-alpha-aminoacyl-[protein] = an N-terminal L-phenylalanyl-L-alpha-aminoacyl-[protein] + tRNA(Phe). In terms of biological role, functions in the N-end rule pathway of protein degradation where it conjugates Leu, Phe and, less efficiently, Met from aminoacyl-tRNAs to the N-termini of proteins containing an N-terminal arginine or lysine. The protein is Leucyl/phenylalanyl-tRNA--protein transferase of Paracoccus denitrificans (strain Pd 1222).